We begin with the raw amino-acid sequence, 338 residues long: MITAESEHKIAPWKIEEVNKLKELLKNGQIVALVDMMEVPARQLQEIRDKIRGTMTLKMSRNTLIERAIKEVAEETGNPEFAKLADYIDKGAAIITTDMNPFKLYKTLEESKSPAPIKGGAVAPCDIEVKAGSTGMPPGPFLGELKSVGIPAAIEKGKIGIKEDKVVAKAGEVVSHKLAVVLSALGIKPVTVGLNLLAAYEDGVIYTPDVLKIDEEEFVQKIQDAYSKAFNLSVNAAIPTAQTIETLLQKAFANARAVSIESAFLTEKTTDDILGKAYSQMLAVAREVGDDALDDELKEKLSTAVVETKAEVEEAKEEEKEEKKEEAAPAAAGLGLLF.

Over residues 309-327 the composition is skewed to basic and acidic residues; that stretch reads KAEVEEAKEEEKEEKKEEA. Residues 309 to 338 form a disordered region; that stretch reads KAEVEEAKEEEKEEKKEEAAPAAAGLGLLF.

Belongs to the universal ribosomal protein uL10 family. In terms of assembly, part of the 50S ribosomal subunit. Forms part of the ribosomal stalk which helps the ribosome interact with GTP-bound translation factors. Forms a heptameric L10(L12)2(L12)2(L12)2 complex, where L10 forms an elongated spine to which the L12 dimers bind in a sequential fashion.

Functionally, forms part of the ribosomal stalk, playing a central role in the interaction of the ribosome with GTP-bound translation factors. The polypeptide is Large ribosomal subunit protein uL10 (Methanothermococcus thermolithotrophicus (Methanococcus thermolithotrophicus)).